The sequence spans 118 residues: UPF0231 protein PM0457 (118 aa).

Belongs to the UPF0231 family.

This Pasteurella multocida (strain Pm70) protein is UPF0231 protein PM0457.